The following is a 325-amino-acid chain: Acetyl-coenzyme A carboxylase carboxyl transferase subunit alpha (325 aa).

The region spanning 38–292 (RLEDRLAKLQ…DETLKQSLKT (255 aa)) is the CoA carboxyltransferase C-terminal domain.

The protein belongs to the AccA family. Acetyl-CoA carboxylase is a heterohexamer composed of biotin carboxyl carrier protein (AccB), biotin carboxylase (AccC) and two subunits each of ACCase subunit alpha (AccA) and ACCase subunit beta (AccD).

The protein resides in the cytoplasm. It catalyses the reaction N(6)-carboxybiotinyl-L-lysyl-[protein] + acetyl-CoA = N(6)-biotinyl-L-lysyl-[protein] + malonyl-CoA. Its pathway is lipid metabolism; malonyl-CoA biosynthesis; malonyl-CoA from acetyl-CoA: step 1/1. Inhibited by pyrrolidine dione antibiotics moiramide B (CPD1) and CPD2. In terms of biological role, component of the acetyl coenzyme A carboxylase (ACC) complex. First, biotin carboxylase catalyzes the carboxylation of biotin on its carrier protein (BCCP) and then the CO(2) group is transferred by the carboxyltransferase to acetyl-CoA to form malonyl-CoA. The sequence is that of Acetyl-coenzyme A carboxylase carboxyl transferase subunit alpha from Bacillus subtilis (strain 168).